A 315-amino-acid chain; its full sequence is Mycothiol acetyltransferase (315 aa).

2 consecutive N-acetyltransferase domains span residues 8–145 (VETS…LPLD) and 163–315 (VSLR…DATA). Glu39 provides a ligand contact to 1D-myo-inositol 2-(L-cysteinylamino)-2-deoxy-alpha-D-glucopyranoside. Residues 81–83 (LVV) and 89–94 (HHGVGT) contribute to the acetyl-CoA site. Residues Glu190, Lys229, and Glu243 each coordinate 1D-myo-inositol 2-(L-cysteinylamino)-2-deoxy-alpha-D-glucopyranoside. 247 to 249 (LGV) contacts acetyl-CoA. A 1D-myo-inositol 2-(L-cysteinylamino)-2-deoxy-alpha-D-glucopyranoside-binding site is contributed by Tyr281. 286-291 (NTVAIR) is a binding site for acetyl-CoA.

It belongs to the acetyltransferase family. MshD subfamily. In terms of assembly, monomer.

The enzyme catalyses 1D-myo-inositol 2-(L-cysteinylamino)-2-deoxy-alpha-D-glucopyranoside + acetyl-CoA = mycothiol + CoA + H(+). Functionally, catalyzes the transfer of acetyl from acetyl-CoA to desacetylmycothiol (Cys-GlcN-Ins) to form mycothiol. The protein is Mycothiol acetyltransferase of Sanguibacter keddieii (strain ATCC 51767 / DSM 10542 / NCFB 3025 / ST-74).